We begin with the raw amino-acid sequence, 487 residues long: Betaine aldehyde dehydrogenase (487 aa).

Residues isoleucine 27 and aspartate 93 each contribute to the K(+) site. An NAD(+)-binding site is contributed by 149–151; the sequence is GAW. The Charge relay system role is filled by lysine 161. NAD(+)-binding positions include 175–178 and 228–231; these read KPSE and SVPT. Leucine 243 is a binding site for K(+). Glutamate 249 serves as the catalytic Proton acceptor. NAD(+) is bound by residues glycine 251, cysteine 283, and glutamate 384. The active-site Nucleophile is the cysteine 283. Cysteine 283 carries the cysteine sulfenic acid (-SOH) modification. Lysine 454 and glycine 457 together coordinate K(+). Residue glutamate 461 is the Charge relay system of the active site.

Belongs to the aldehyde dehydrogenase family. As to quaternary structure, dimer of dimers. It depends on K(+) as a cofactor.

The enzyme catalyses betaine aldehyde + NAD(+) + H2O = glycine betaine + NADH + 2 H(+). It participates in amine and polyamine biosynthesis; betaine biosynthesis via choline pathway; betaine from betaine aldehyde: step 1/1. Functionally, involved in the biosynthesis of the osmoprotectant glycine betaine. Catalyzes the irreversible oxidation of betaine aldehyde to the corresponding acid. This Brucella anthropi (strain ATCC 49188 / DSM 6882 / CCUG 24695 / JCM 21032 / LMG 3331 / NBRC 15819 / NCTC 12168 / Alc 37) (Ochrobactrum anthropi) protein is Betaine aldehyde dehydrogenase.